The following is a 431-amino-acid chain: Serine--tRNA ligase (431 aa).

235–237 (TSE) serves as a coordination point for L-serine. An ATP-binding site is contributed by 266 to 268 (RSE). Glu289 provides a ligand contact to L-serine. 353 to 356 (EISS) is a binding site for ATP. Ser388 provides a ligand contact to L-serine.

It belongs to the class-II aminoacyl-tRNA synthetase family. Type-1 seryl-tRNA synthetase subfamily. As to quaternary structure, homodimer. The tRNA molecule binds across the dimer.

Its subcellular location is the cytoplasm. It carries out the reaction tRNA(Ser) + L-serine + ATP = L-seryl-tRNA(Ser) + AMP + diphosphate + H(+). It catalyses the reaction tRNA(Sec) + L-serine + ATP = L-seryl-tRNA(Sec) + AMP + diphosphate + H(+). The protein operates within aminoacyl-tRNA biosynthesis; selenocysteinyl-tRNA(Sec) biosynthesis; L-seryl-tRNA(Sec) from L-serine and tRNA(Sec): step 1/1. In terms of biological role, catalyzes the attachment of serine to tRNA(Ser). Is also able to aminoacylate tRNA(Sec) with serine, to form the misacylated tRNA L-seryl-tRNA(Sec), which will be further converted into selenocysteinyl-tRNA(Sec). The sequence is that of Serine--tRNA ligase from Paraburkholderia phytofirmans (strain DSM 17436 / LMG 22146 / PsJN) (Burkholderia phytofirmans).